The following is a 337-amino-acid chain: MKLSEIARRLGCTLDNCPDPDAVEITAVTGIEAAGPTDITFVSNPRYAAAAKTTHAGAIIVSDDFTAGRAPLVRSKNPYLTFAKAIELFYQAPKYAPGIHPTAVISPTAKVGANASIGPYVVIEDNVAIGANCVLRAHVVIYEGVTIGDNFFAHAHAVVREHCRIGNNVILQNGVVIGADGYGFARDTDGWYKIAQSGTTILDDNVEVQANSTVDRASIGETHIYADAKIDNLVMIGHGSSVGEHSLLCSQVGLAGSSHVGKNVILAGQVGVAGHLHIGDGVIAAGQTGVQNDIEPGKRIGGSPSYDHKQWIRSWQIQTRLPEIVKELRNLASKKSE.

His238 functions as the Proton acceptor in the catalytic mechanism.

It belongs to the transferase hexapeptide repeat family. LpxD subfamily. In terms of assembly, homotrimer.

The enzyme catalyses a UDP-3-O-[(3R)-3-hydroxyacyl]-alpha-D-glucosamine + a (3R)-hydroxyacyl-[ACP] = a UDP-2-N,3-O-bis[(3R)-3-hydroxyacyl]-alpha-D-glucosamine + holo-[ACP] + H(+). It participates in bacterial outer membrane biogenesis; LPS lipid A biosynthesis. Catalyzes the N-acylation of UDP-3-O-acylglucosamine using 3-hydroxyacyl-ACP as the acyl donor. Is involved in the biosynthesis of lipid A, a phosphorylated glycolipid that anchors the lipopolysaccharide to the outer membrane of the cell. The polypeptide is UDP-3-O-acylglucosamine N-acyltransferase 1 (Koribacter versatilis (strain Ellin345)).